Consider the following 804-residue polypeptide: Phenylalanine--tRNA ligase beta subunit (804 aa).

Residues 38–148 (RAAFRAFTIA…ENAPVGTSFA (111 aa)) form the tRNA-binding domain. One can recognise a B5 domain in the interval 401-476 (HTARVIDFPV…RIHGINRIDP (76 aa)). Aspartate 454, aspartate 460, glutamate 463, and glutamate 464 together coordinate Mg(2+). The FDX-ACB domain occupies 710 to 803 (SLFQSLKRDY…VAKQTGGVLR (94 aa)).

This sequence belongs to the phenylalanyl-tRNA synthetase beta subunit family. Type 1 subfamily. Tetramer of two alpha and two beta subunits. Mg(2+) serves as cofactor.

It localises to the cytoplasm. It carries out the reaction tRNA(Phe) + L-phenylalanine + ATP = L-phenylalanyl-tRNA(Phe) + AMP + diphosphate + H(+). The sequence is that of Phenylalanine--tRNA ligase beta subunit from Brucella melitensis biotype 1 (strain ATCC 23456 / CCUG 17765 / NCTC 10094 / 16M).